The primary structure comprises 361 residues: Putative agmatine deiminase (361 aa).

Cysteine 354 serves as the catalytic Amidino-cysteine intermediate.

The protein belongs to the agmatine deiminase family.

It catalyses the reaction agmatine + H2O = N-carbamoylputrescine + NH4(+). This Streptococcus pneumoniae (strain 70585) protein is Putative agmatine deiminase.